The primary structure comprises 264 residues: Tryptophan synthase alpha chain (264 aa).

Residues Glu-49 and Asp-60 each act as proton acceptor in the active site.

Belongs to the TrpA family. As to quaternary structure, tetramer of two alpha and two beta chains.

It carries out the reaction (1S,2R)-1-C-(indol-3-yl)glycerol 3-phosphate + L-serine = D-glyceraldehyde 3-phosphate + L-tryptophan + H2O. Its pathway is amino-acid biosynthesis; L-tryptophan biosynthesis; L-tryptophan from chorismate: step 5/5. The alpha subunit is responsible for the aldol cleavage of indoleglycerol phosphate to indole and glyceraldehyde 3-phosphate. The chain is Tryptophan synthase alpha chain from Geotalea daltonii (strain DSM 22248 / JCM 15807 / FRC-32) (Geobacter daltonii).